A 341-amino-acid polypeptide reads, in one-letter code: Ribonucleoside-diphosphate reductase subunit beta (341 aa).

D89, E120, and H123 together coordinate Fe cation. The active site involves Y127. Fe cation is bound by residues E185, E219, and H222.

This sequence belongs to the ribonucleoside diphosphate reductase small chain family. As to quaternary structure, tetramer of two alpha and two beta subunits. It depends on Fe cation as a cofactor.

The catalysed reaction is a 2'-deoxyribonucleoside 5'-diphosphate + [thioredoxin]-disulfide + H2O = a ribonucleoside 5'-diphosphate + [thioredoxin]-dithiol. Functionally, provides the precursors necessary for DNA synthesis. Catalyzes the biosynthesis of deoxyribonucleotides from the corresponding ribonucleotides. The protein is Ribonucleoside-diphosphate reductase subunit beta (nrdB) of Helicobacter pylori (strain J99 / ATCC 700824) (Campylobacter pylori J99).